A 148-amino-acid polypeptide reads, in one-letter code: Putative pre-16S rRNA nuclease (148 aa).

It belongs to the YqgF nuclease family.

Its subcellular location is the cytoplasm. Its function is as follows. Could be a nuclease involved in processing of the 5'-end of pre-16S rRNA. The sequence is that of Putative pre-16S rRNA nuclease from Chlamydia trachomatis serovar L2 (strain ATCC VR-902B / DSM 19102 / 434/Bu).